The sequence spans 337 residues: Undecaprenyl-phosphate 4-deoxy-4-formamido-L-arabinose transferase (337 aa).

Helical transmembrane passes span 235–255 (LSIIGFSMALLGVLFAALLII) and 270–290 (FVLFAVLFVFTGGQFIGMGLL).

Belongs to the glycosyltransferase 2 family.

It localises to the cell inner membrane. It carries out the reaction UDP-4-deoxy-4-formamido-beta-L-arabinose + di-trans,octa-cis-undecaprenyl phosphate = 4-deoxy-4-formamido-alpha-L-arabinopyranosyl di-trans,octa-cis-undecaprenyl phosphate + UDP. It participates in glycolipid biosynthesis; 4-amino-4-deoxy-alpha-L-arabinose undecaprenyl phosphate biosynthesis; 4-amino-4-deoxy-alpha-L-arabinose undecaprenyl phosphate from UDP-4-deoxy-4-formamido-beta-L-arabinose and undecaprenyl phosphate: step 1/2. Its pathway is bacterial outer membrane biogenesis; lipopolysaccharide biosynthesis. In terms of biological role, catalyzes the transfer of 4-deoxy-4-formamido-L-arabinose from UDP to undecaprenyl phosphate. The modified arabinose is attached to lipid A and is required for resistance to polymyxin and cationic antimicrobial peptides. This chain is Undecaprenyl-phosphate 4-deoxy-4-formamido-L-arabinose transferase, found in Pseudomonas savastanoi pv. phaseolicola (strain 1448A / Race 6) (Pseudomonas syringae pv. phaseolicola (strain 1448A / Race 6)).